Consider the following 896-residue polypeptide: Histone-lysine N-methyltransferase CLF (896 aa).

2 disordered regions span residues 344 to 419 and 459 to 514; these read DNLK…NRRI and SGIK…DGCD. Residues 358 to 390 are compositionally biased toward low complexity; sequence GSSGQKTKSQQSESSSTARVSSESSESEVQLLS. Composition is skewed to polar residues over residues 391-400, 465-476, and 485-498; these read NKSPQHSPGL, VVSSQCNSPSTR, and QMEN…AQSD. The segment covering 504 to 514 has biased composition (basic and acidic residues); that stretch reads NNEHSATDGCD. In terms of domain architecture, CXC spans 633–732; the sequence is RKRITERKDQ…TLGVPNQRGD (100 aa). One can recognise an SET domain in the interval 747 to 862; it reads QRVLLGRSDV…AGEELFYDYR (116 aa). Residue Y861 participates in S-adenosyl-L-methionine binding. The span at 869–884 shows a compositional bias: basic and acidic residues; it reads PAWARKPEGPGAKDDA. Residues 869-896 are disordered; that stretch reads PAWARKPEGPGAKDDAQPSTGRAKKLAH.

It belongs to the class V-like SAM-binding methyltransferase superfamily. Histone-lysine methyltransferase family. EZ subfamily. In terms of assembly, interacts with FIE1. Component of the polycomb repressive complex 2 (PRC2), composed of the core PRC2 components FIE2, EMF2B and EZ1. PRC2 methylates 'Lys-27' residues of histone H3 (H3K27me3), leading to transcriptional repression of the affected target gene. Widely expressed. Highly expressed in young panicle.

It catalyses the reaction L-lysyl(27)-[histone H3] + 3 S-adenosyl-L-methionine = N(6),N(6),N(6)-trimethyl-L-lysyl(27)-[histone H3] + 3 S-adenosyl-L-homocysteine + 3 H(+). In terms of biological role, polycomb group (PcG) protein. Catalytic subunit of some PcG multiprotein complex, which methylates 'Lys-27' of histone H3, leading to transcriptional repression of the affected target genes. PcG proteins act by forming multiprotein complexes, which are required to maintain the transcriptionally repressive state of homeotic genes throughout development. PcG proteins are not required to initiate repression, but to maintain it during later stages of development. Involved in the regulation of flowering. Represses flowering under long day (LD) conditions. Regulates the trimethylation on histone H3 'Lys-27' (H3K27me3) of the flowering regulators MADS14, MADS15, RFT1, EHD1, HD3A and LF. The sequence is that of Histone-lysine N-methyltransferase CLF from Oryza sativa subsp. japonica (Rice).